We begin with the raw amino-acid sequence, 170 residues long: NADH-quinone oxidoreductase subunit B (170 aa).

[4Fe-4S] cluster is bound by residues C46, C47, C111, and C141.

This sequence belongs to the complex I 20 kDa subunit family. NDH-1 is composed of 14 different subunits. Subunits NuoB, C, D, E, F, and G constitute the peripheral sector of the complex. Requires [4Fe-4S] cluster as cofactor.

The protein localises to the cell membrane. It carries out the reaction a quinone + NADH + 5 H(+)(in) = a quinol + NAD(+) + 4 H(+)(out). In terms of biological role, NDH-1 shuttles electrons from NADH, via FMN and iron-sulfur (Fe-S) centers, to quinones in the respiratory chain. The immediate electron acceptor for the enzyme in this species is believed to be a menaquinone. Couples the redox reaction to proton translocation (for every two electrons transferred, four hydrogen ions are translocated across the cytoplasmic membrane), and thus conserves the redox energy in a proton gradient. In Geobacillus thermodenitrificans (strain NG80-2), this protein is NADH-quinone oxidoreductase subunit B.